Consider the following 828-residue polypeptide: Auxin response factor 2B (828 aa).

A DNA-binding region (TF-B3) is located at residues 128 to 230; that stretch reads FCKTLTASDT…ELRVGVRRAM (103 aa). Disordered stretches follow at residues 348-397, 681-703, and 791-828; these read PDRV…GSSK, EQFQ…HSTR, and NPGT…PEDS. Over residues 360-370 the composition is skewed to pro residues; the sequence is LSPPALNPLPI. Residues 380 to 390 are compositionally biased toward polar residues; sequence VLPSSPDSSVL. The region spanning 703–786 is the PB1 domain; sequence RSCTKVHKQG…RKIFIYTKDE (84 aa). The segment covering 791–806 has biased composition (polar residues); the sequence is NPGTLNSKGEDNSSVA.

Belongs to the ARF family. As to quaternary structure, homodimers and heterodimers. As to expression, expressed in root, leaf and stem. Also expressed in flower and fruit. Expressed in flower buds about three days before opening including stamen, petal and sepal with the highest in ovary.

Its subcellular location is the nucleus. In terms of biological role, auxin response factors (ARFs) are transcriptional factors that binds specifically to the DNA sequence 5'-TGTCTC-3' found in the auxin-responsive promoter elements (AuxREs). Could act as transcriptional activator or repressor. Involved in the control of fruit ripening process. Regulates expression of a number of ripening regulators, transcription factors, and ethylene biosynthesis and signaling components. May act as a transcriptional repressor of auxin-responsive genes. In Solanum lycopersicum (Tomato), this protein is Auxin response factor 2B.